Reading from the N-terminus, the 142-residue chain is Transcriptional regulator MraZ (142 aa).

SpoVT-AbrB domains follow at residues 5 to 47 (RFTH…PMDS) and 76 to 119 (ATVV…SPEN).

This sequence belongs to the MraZ family. In terms of assembly, forms oligomers.

Its subcellular location is the cytoplasm. It localises to the nucleoid. In Thermomicrobium roseum (strain ATCC 27502 / DSM 5159 / P-2), this protein is Transcriptional regulator MraZ.